Here is a 231-residue protein sequence, read N- to C-terminus: Uracil phosphoribosyltransferase (231 aa).

38–42 serves as a coordination point for GTP; the sequence is KGLVR. 5-phospho-alpha-D-ribose 1-diphosphate is bound by residues R87, R112, and 140-148; that span reads DPMIATGST. Residues I203 and 208 to 210 each bind uracil; that span reads GDA. D209 contributes to the 5-phospho-alpha-D-ribose 1-diphosphate binding site.

It belongs to the UPRTase family. Mg(2+) is required as a cofactor.

It carries out the reaction UMP + diphosphate = 5-phospho-alpha-D-ribose 1-diphosphate + uracil. The protein operates within pyrimidine metabolism; UMP biosynthesis via salvage pathway; UMP from uracil: step 1/1. With respect to regulation, allosterically activated by GTP. Its function is as follows. Catalyzes the conversion of uracil and 5-phospho-alpha-D-ribose 1-diphosphate (PRPP) to UMP and diphosphate. In Methanococcus maripaludis (strain DSM 14266 / JCM 13030 / NBRC 101832 / S2 / LL), this protein is Uracil phosphoribosyltransferase.